A 213-amino-acid chain; its full sequence is MKSLQALFGGTFDPVHYGHLKPVETLANLIGLTRVTIIPNNVPPHRPQPEANSVQRKHMLELAIADKPLFTLDERELKRNAPSYTAQTLKEWRQEQGPDVPLAFIIGQDSLLTFPTWYEYETILDNAHLIVCRRPGYPLEMAQPQYQQWLEDHLTHNPEDLHLQPAGKIYLAETPWFNISATIIRERLQNGESCEDLLPEPVLTYINQQGLYR.

This sequence belongs to the NadD family.

The enzyme catalyses nicotinate beta-D-ribonucleotide + ATP + H(+) = deamido-NAD(+) + diphosphate. The protein operates within cofactor biosynthesis; NAD(+) biosynthesis; deamido-NAD(+) from nicotinate D-ribonucleotide: step 1/1. Functionally, catalyzes the reversible adenylation of nicotinate mononucleotide (NaMN) to nicotinic acid adenine dinucleotide (NaAD). In Escherichia coli O139:H28 (strain E24377A / ETEC), this protein is Probable nicotinate-nucleotide adenylyltransferase.